The following is a 125-amino-acid chain: Small ribosomal subunit protein uS12 (125 aa).

Aspartate 89 is modified (3-methylthioaspartic acid).

It belongs to the universal ribosomal protein uS12 family. Part of the 30S ribosomal subunit. Contacts proteins S8 and S17. May interact with IF1 in the 30S initiation complex.

Functionally, with S4 and S5 plays an important role in translational accuracy. Its function is as follows. Interacts with and stabilizes bases of the 16S rRNA that are involved in tRNA selection in the A site and with the mRNA backbone. Located at the interface of the 30S and 50S subunits, it traverses the body of the 30S subunit contacting proteins on the other side and probably holding the rRNA structure together. The combined cluster of proteins S8, S12 and S17 appears to hold together the shoulder and platform of the 30S subunit. This chain is Small ribosomal subunit protein uS12, found in Clostridium acetobutylicum (strain ATCC 824 / DSM 792 / JCM 1419 / IAM 19013 / LMG 5710 / NBRC 13948 / NRRL B-527 / VKM B-1787 / 2291 / W).